A 228-amino-acid polypeptide reads, in one-letter code: Endonuclease V (228 aa).

The Mg(2+) site is built by D36 and D104.

Belongs to the endonuclease V family. The cofactor is Mg(2+).

The protein resides in the cytoplasm. It catalyses the reaction Endonucleolytic cleavage at apurinic or apyrimidinic sites to products with a 5'-phosphate.. DNA repair enzyme involved in the repair of deaminated bases. Selectively cleaves double-stranded DNA at the second phosphodiester bond 3' to a deoxyinosine leaving behind the intact lesion on the nicked DNA. This Serratia proteamaculans (strain 568) protein is Endonuclease V.